A 533-amino-acid polypeptide reads, in one-letter code: Probable dolichyl pyrophosphate Man9GlcNAc2 alpha-1,3-glucosyltransferase (533 aa).

A disordered region spans residues 1 to 20 (MPKKKPAKHSGEDDITIPVS). The next 9 helical transmembrane spans lie at 42–64 (FLCI…YSGA), 149–169 (WTVL…FVLV), 184–204 (WHIA…GHFQ), 214–234 (VGAI…LFSL), 264–284 (ILSV…FWWP), 360–380 (GFLY…FQVH), 422–442 (LLIP…SPGN), 463–483 (VFLL…YLTI), and 491–511 (FLFE…FAFY).

It belongs to the ALG6/ALG8 glucosyltransferase family.

It is found in the endoplasmic reticulum membrane. The enzyme catalyses an alpha-D-Man-(1-&gt;2)-alpha-D-Man-(1-&gt;2)-alpha-D-Man-(1-&gt;3)-[alpha-D-Man-(1-&gt;2)-alpha-D-Man-(1-&gt;3)-[alpha-D-Man-(1-&gt;2)-alpha-D-Man-(1-&gt;6)]-alpha-D-Man-(1-&gt;6)]-beta-D-Man-(1-&gt;4)-beta-D-GlcNAc-(1-&gt;4)-alpha-D-GlcNAc-diphospho-di-trans,poly-cis-dolichol + a di-trans,poly-cis-dolichyl beta-D-glucosyl phosphate = an alpha-D-Glc-(1-&gt;3)-alpha-D-Man-(1-&gt;2)-alpha-D-Man-(1-&gt;2)-alpha-D-Man-(1-&gt;3)-[alpha-D-Man-(1-&gt;2)-alpha-D-Man-(1-&gt;3)-[alpha-D-Man-(1-&gt;2)-alpha-D-Man-(1-&gt;6)]-alpha-D-Man-(1-&gt;6)]-beta-D-Man-(1-&gt;4)-beta-D-GlcNAc-(1-&gt;4)-alpha-D-GlcNAc-diphospho-di-trans,poly-cis-dolichol + a di-trans,poly-cis-dolichyl phosphate + H(+). It functions in the pathway protein modification; protein glycosylation. Functionally, adds the first glucose residue to the lipid-linked oligosaccharide precursor for N-linked glycosylation. Transfers glucose from dolichyl phosphate glucose (Dol-P-Glc) onto the lipid-linked oligosaccharide Man(9)GlcNAc(2)-PP-Dol. This is Probable dolichyl pyrophosphate Man9GlcNAc2 alpha-1,3-glucosyltransferase from Arabidopsis thaliana (Mouse-ear cress).